The chain runs to 2074 residues: Cell adhesion molecule Dscam2 (2074 aa).

The N-terminal stretch at 1–21 (MWISSRFFVILLLLNLDNTCS) is a signal peptide. Residues 22–1619 (EPFEAHLRGP…QTTVIFANIN (1598 aa)) are Extracellular-facing. 8 Ig-like C2-type domains span residues 31–120 (PGFV…RIVS), 238–326 (PSVV…LRLT), 330–417 (PIQV…AELQ), 422–516 (PPVL…ARLN), 521–607 (PYIR…GEVT), 612–698 (PSIE…IKYT), 707–802 (PRWI…LKVN), and 805–902 (PYFS…LQVQ). 8 disulfides stabilise this stretch: C53/C109, C259/C310, C352/C400, C444/C500, C541/C590, C633/C686, C728/C783, and C826/C884. Fibronectin type-III domains follow at residues 907–1003 (PPSV…TEPQ), 1008–1108 (PPLS…TMED), 1113–1211 (PPED…SEED), and 1215–1311 (APAD…TNRI). The Ig-like C2-type 9 domain maps to 1312 to 1400 (PARIISFGGP…DRLTHTLIVQ (89 aa)). A disulfide bridge links C1334 with C1382. Fibronectin type-III domains follow at residues 1402–1495 (PPTA…TQGQ) and 1496–1595 (SPGH…TKDG). A helical membrane pass occupies residues 1620-1640 (LLIPTIAAVSGMFCTIIMIIV). Residues 1641–2074 (CYRHMLKNAP…KFFTAPTLPK (434 aa)) are Cytoplasmic-facing. 4 disordered regions span residues 1739–1766 (EGCSSPPPAAVLNPPTTTTHHHHHHQRP), 1778–1917 (PFHN…KSIS), 1936–1974 (SPSISTQQQKQFHKQQLQNSSTNNSQHSSSNPNSSSLKQ), and 2011–2074 (PSSQ…TLPK). Basic residues predominate over residues 1757-1766 (THHHHHHQRP). Positions 1831 to 1846 (AQSSTSSDLSPMSEQK) are enriched in polar residues. A compositionally biased stretch (basic residues) spans 1848-1858 (LPRRGRSRYHH). A compositionally biased stretch (polar residues) spans 1859-1868 (QQYQFSTNTT). Composition is skewed to low complexity over residues 1875–1903 (NKMNNNTTSNTNTTATNTTATPSTSSNSN), 1942–1974 (QQQKQFHKQQLQNSSTNNSQHSSSNPNSSSLKQ), and 2036–2051 (SQQSHPHQQQQQQQHP). Positions 2055 to 2066 (LNPSTAMLSSKF) are enriched in polar residues.

The protein resides in the membrane. Cell adhesion molecule. The protein is Cell adhesion molecule Dscam2 (Dscam2) of Drosophila melanogaster (Fruit fly).